Consider the following 434-residue polypeptide: Probable G-protein coupled receptor 150 (434 aa).

Residues 1–3 (MED) lie on the Extracellular side of the membrane. The helical transmembrane segment at 4–24 (LFSPSILPPAPNISVPILLGW) threads the bilayer. The Cytoplasmic portion of the chain corresponds to 25 to 43 (GLNLTLGQGAPASGPPSRR). A helical membrane pass occupies residues 44–64 (VRLVFLGVILVVAVAGNTTVL). The Extracellular portion of the chain corresponds to 65 to 81 (CRLCGGGGPWAGPKRRK). A helical membrane pass occupies residues 82-102 (MDFLLVQLALADLYACGGTAL). The Cytoplasmic segment spans residues 103 to 162 (SQLAWELLGEPRAATGDLACRFLQLLQASGRGASAHLVVLIALERRRAVRLPHGRPLPAR). A helical membrane pass occupies residues 163 to 183 (ALAALGWLLALLLALPPAFVV). The Extracellular portion of the chain corresponds to 184-237 (RGDSPSPLPPPPPPTSLQPGAPPAARAWPGERRCHGIFAPLPRWHLQVYAFYEA). Residues 188-210 (PSPLPPPPPPTSLQPGAPPAARA) form a disordered region. A compositionally biased stretch (pro residues) spans 189 to 205 (SPLPPPPPPTSLQPGAP). The chain crosses the membrane as a helical span at residues 238–258 (VAGFVAPVTVLGVACGHLLSV). Over 259-293 (WWRHRPQAPAAAAPWSASPGRAPAPSALPRAKVQS) the chain is Cytoplasmic. A helical transmembrane segment spans residues 294 to 314 (LKMSLLLALLFVGCELPYFAA). The Extracellular portion of the chain corresponds to 315 to 334 (RLAAAWSSGPAGDWEGEGLS). The helical transmembrane segment at 335–355 (AALRVVAMANSALNPFVYLFF) threads the bilayer. Over 356–434 (QAGDCRLRRQ…PLPCSCESAF (79 aa)) the chain is Cytoplasmic. The span at 398–407 (WPHPHYHHAR) shows a compositional bias: basic residues. Residues 398-434 (WPHPHYHHARREPLDEGGLRPPPPRPRPLPCSCESAF) form a disordered region. The span at 417–426 (RPPPPRPRPL) shows a compositional bias: pro residues.

Belongs to the G-protein coupled receptor 1 family.

The protein localises to the cell membrane. Orphan receptor. This Homo sapiens (Human) protein is Probable G-protein coupled receptor 150 (GPR150).